A 287-amino-acid chain; its full sequence is Elongation factor Ts (287 aa).

Residues 79–82 (TDFV) are involved in Mg(2+) ion dislocation from EF-Tu.

This sequence belongs to the EF-Ts family.

The protein localises to the cytoplasm. Functionally, associates with the EF-Tu.GDP complex and induces the exchange of GDP to GTP. It remains bound to the aminoacyl-tRNA.EF-Tu.GTP complex up to the GTP hydrolysis stage on the ribosome. The protein is Elongation factor Ts of Anaplasma phagocytophilum (strain HZ).